We begin with the raw amino-acid sequence, 200 residues long: Probable nicotinate-nucleotide adenylyltransferase (200 aa).

Belongs to the NadD family.

It catalyses the reaction nicotinate beta-D-ribonucleotide + ATP + H(+) = deamido-NAD(+) + diphosphate. Its pathway is cofactor biosynthesis; NAD(+) biosynthesis; deamido-NAD(+) from nicotinate D-ribonucleotide: step 1/1. Functionally, catalyzes the reversible adenylation of nicotinate mononucleotide (NaMN) to nicotinic acid adenine dinucleotide (NaAD). The sequence is that of Probable nicotinate-nucleotide adenylyltransferase from Clavibacter sepedonicus (Clavibacter michiganensis subsp. sepedonicus).